The following is a 173-amino-acid chain: dCTP deaminase, dUMP-forming (173 aa).

DCTP is bound by residues 93 to 98, Asp111, 119 to 121, and Gln138; these read RSSIGR and TLE. Residue Glu121 is the Proton donor/acceptor of the active site.

The protein belongs to the dCTP deaminase family. In terms of assembly, homotrimer.

It carries out the reaction dCTP + 2 H2O = dUMP + NH4(+) + diphosphate. The protein operates within pyrimidine metabolism; dUMP biosynthesis; dUMP from dCTP: step 1/1. Its function is as follows. Bifunctional enzyme that catalyzes both the deamination of dCTP to dUTP and the hydrolysis of dUTP to dUMP without releasing the toxic dUTP intermediate. The chain is dCTP deaminase, dUMP-forming from Leptospira borgpetersenii serovar Hardjo-bovis (strain JB197).